Reading from the N-terminus, the 210-residue chain is Putative 3-methyladenine DNA glycosylase (210 aa).

The protein belongs to the DNA glycosylase MPG family.

The protein is Putative 3-methyladenine DNA glycosylase of Lactobacillus helveticus (strain DPC 4571).